Reading from the N-terminus, the 1069-residue chain is Rab GTPase-activating protein 1 (1069 aa).

Positions 1-79 (MDDKASVGKI…DPPMDDQPGE (79 aa)) are disordered. Low complexity predominate over residues 7-22 (VGKISVSSDSVSTLNS). Position 42 is a phosphoserine (serine 42). The 157-residue stretch at 142–298 (EDSVVFSKLT…IFTFSVSLEI (157 aa)) folds into the PID domain. Residue serine 360 is modified to Phosphoserine. The tract at residues 482–527 (ERERRKTTASPSVRLPQSGSQSSVIPSPPEDDEEEDNDEPLLSGSG) is disordered. Residues 489-506 (TASPSVRLPQSGSQSSVI) are compositionally biased toward polar residues. Residues 510 to 520 (PEDDEEEDNDE) show a composition bias toward acidic residues. The 187-residue stretch at 566 to 752 (GVPEALRGEV…HIIDLLLCEG (187 aa)) folds into the Rab-GAP TBC domain. Residues 798–1047 (KKLMELACNM…ALNEVQAAKK (250 aa)) adopt a coiled-coil conformation. Threonine 996 bears the Phosphothreonine mark.

Interacts with RAB6A and tubulin gamma.

Its subcellular location is the cytoplasm. It is found in the cytosol. The protein localises to the cytoskeleton. It localises to the microtubule organizing center. The protein resides in the centrosome. May act as a GTPase-activating protein of RAB6A. May play a role in microtubule nucleation by centrosome. May participate in a RAB6A-mediated pathway involved in the metaphase-anaphase transition. This chain is Rab GTPase-activating protein 1 (RABGAP1), found in Homo sapiens (Human).